The primary structure comprises 171 residues: Small ribosomal subunit protein uS5 (171 aa).

In terms of domain architecture, S5 DRBM spans Y14–V77.

The protein belongs to the universal ribosomal protein uS5 family. Part of the 30S ribosomal subunit. Contacts proteins S4 and S8.

Its function is as follows. With S4 and S12 plays an important role in translational accuracy. Functionally, located at the back of the 30S subunit body where it stabilizes the conformation of the head with respect to the body. In Vesicomyosocius okutanii subsp. Calyptogena okutanii (strain HA), this protein is Small ribosomal subunit protein uS5.